The following is a 241-amino-acid chain: Endodeoxyribonuclease NucC (241 aa).

Active-site residues include Asp-73, Glu-104, and Lys-106. 2 residues coordinate Mg(2+): Asp-73 and Glu-104.

This sequence belongs to the NucC endonuclease family. As to quaternary structure, self-oligomerizes. Forms homotrimers; in the presence of cAAA the trimers associate face-to-face to form homohexamers. The 2 cAAA-binding sites are on the exterior of the hexamer at the three-way junction, there are maximally 2 cyclic nucleotides per hexamer. Mg(2+) is required as a cofactor.

With respect to regulation, activated by cAAA and to a lesser extent cAA and cAAG; cAAA and cAA are products of its cognate CD-NTase. Cyclic nucleotide binding causes hexamerization. Cyclic nucleotide binding causes a series of shifts that enclose the cAAA molecule, enable hexamer formation and juxtapose pairs of active sites to allow dsDNA cleavage. In terms of biological role, effector DNase of a CBASS antivirus system. CBASS (cyclic oligonucleotide-based antiphage signaling system) provides immunity against bacteriophage. The CD-NTase protein synthesizes cyclic nucleotides in response to infection; these serve as specific second messenger signals. The signals activate a diverse range of effectors, leading to bacterial cell death and thus abortive phage infection. A type III-C(AAA) CBASS system. A cyclic nucleotide-activated dsDNase. In the presence of 3',3',3'-cyclic AMP-AMP-AMP (cAAA), and to a lesser extent 3',3',3'-cyclic AMP-AMP-GMP (cAAG) and cyclic-di-AMP (c-di-AMP), endonucleolytically degrades dsDNA. Binds one cAAA in a pocket on one surface of the trimer; cAAA binding promotes hexamerization, which is necessary for nuclease activation. Also binds c-diAMP or linear di-AMP with lower affinity. The nuclease digests dsDNA to about 50 bp lengths with a 2-base 3' overhang and a consensus recognition site of 5'-Axx|T-3'. DNA has been modeled to contact a pair of juxtaposed active sites (one from each layer of the hexamer), accounting for cleavage on both strands and the 2-base overhang. Its function is as follows. Protects E.coli strain JP313 against bacteriophage lambda cI- infection. When the cdnC-cap7-cap6-nucC operon is transformed into a susceptible strain it confers bacteriophage immunity. Mutations in the sensor (Cap7 also called HORMA) or effector proteins (CdnC, NucC) but not the disassembly protein (Cap6 also called Trip13) no longer confer immunity. The presence of the intact operon leads to culture collapse and cell death which occurs before the phage has finished its replication cycle, thus protecting non-infected bacteria by aborting the phage infection and preventing its propagation. The protein is Endodeoxyribonuclease NucC of Escherichia coli (strain MS 115-1).